Consider the following 193-residue polypeptide: Putative RING finger protein ORF38 (193 aa).

The segment at 12-50 (CCICLDDEDVDRDNTIPCRHTVCRTCYVKPMLDQCPVCR) adopts an RING-type zinc-finger fold.

The polypeptide is Putative RING finger protein ORF38 (Magallana gigas (Pacific oyster)).